The sequence spans 146 residues: Large-conductance mechanosensitive channel (146 aa).

Helical transmembrane passes span 12 to 32 and 83 to 103; these read AFAM…GGAF and GNFL…FLFI.

This sequence belongs to the MscL family. In terms of assembly, homopentamer.

Its subcellular location is the cell inner membrane. In terms of biological role, channel that opens in response to stretch forces in the membrane lipid bilayer. May participate in the regulation of osmotic pressure changes within the cell. This chain is Large-conductance mechanosensitive channel, found in Phocaeicola vulgatus (strain ATCC 8482 / DSM 1447 / JCM 5826 / CCUG 4940 / NBRC 14291 / NCTC 11154) (Bacteroides vulgatus).